The following is a 451-amino-acid chain: Trigger factor (451 aa).

Residues 173-258 (GDRVTLDFVG…LKKIEWAHLP (86 aa)) form the PPIase FKBP-type domain.

The protein belongs to the FKBP-type PPIase family. Tig subfamily.

It localises to the cytoplasm. The enzyme catalyses [protein]-peptidylproline (omega=180) = [protein]-peptidylproline (omega=0). In terms of biological role, involved in protein export. Acts as a chaperone by maintaining the newly synthesized protein in an open conformation. Functions as a peptidyl-prolyl cis-trans isomerase. The polypeptide is Trigger factor (Cupriavidus necator (strain ATCC 17699 / DSM 428 / KCTC 22496 / NCIMB 10442 / H16 / Stanier 337) (Ralstonia eutropha)).